We begin with the raw amino-acid sequence, 504 residues long: GTPase Obg (504 aa).

The Obg domain maps to 2–159 (SQFVDRVVLH…KDVTLELKSM (158 aa)). The segment at 68 to 88 (AERGNNGAGDDRHGARGKDLT) is disordered. In terms of domain architecture, OBG-type G spans 160–340 (ADVGLVGFPS…LRFALMDIVR (181 aa)). GTP is bound by residues 166 to 173 (GFPSAGKS), 191 to 195 (FTTLA), 212 to 215 (DVPG), 292 to 295 (NKMD), and 321 to 323 (STV). Positions 173 and 193 each coordinate Mg(2+). Residues 364–444 (KRKGRFADFE…IGGITFEWDP (81 aa)) form the OCT domain. The disordered stretch occupies residues 449–481 (GVDQTPAYGRGKDRRLEQTDRVTAEQRKRASQA). Basic and acidic residues predominate over residues 458 to 476 (RGKDRRLEQTDRVTAEQRK).

It belongs to the TRAFAC class OBG-HflX-like GTPase superfamily. OBG GTPase family. As to quaternary structure, monomer. Requires Mg(2+) as cofactor.

It localises to the cytoplasm. Its function is as follows. An essential GTPase which binds GTP, GDP and possibly (p)ppGpp with moderate affinity, with high nucleotide exchange rates and a fairly low GTP hydrolysis rate. Plays a role in control of the cell cycle, stress response, ribosome biogenesis and in those bacteria that undergo differentiation, in morphogenesis control. The polypeptide is GTPase Obg (Corynebacterium urealyticum (strain ATCC 43042 / DSM 7109)).